The following is an 83-amino-acid chain: MIEGRVQRVGFRASCNRRALDLGISGWVRNLSDGRVEVQAEGPPLALSELRAWCEVGPPGARVVRVTPSQLPITGDDWFEVRY.

One can recognise an Acylphosphatase-like domain in the interval 1-83; that stretch reads MIEGRVQRVG…TGDDWFEVRY (83 aa). Active-site residues include Arg12 and Asn30.

The protein belongs to the acylphosphatase family.

The catalysed reaction is an acyl phosphate + H2O = a carboxylate + phosphate + H(+). In Synechococcus sp. (strain CC9605), this protein is Acylphosphatase (acyP).